A 950-amino-acid polypeptide reads, in one-letter code: Leucine--tRNA ligase (950 aa).

The short motif at 72–83 is the 'HIGH' region element; the sequence is PYPSGEGLHVGH. The 'KMSKS' region signature appears at 722 to 726; that stretch reads KIGKS. Lys-725 serves as a coordination point for ATP.

The protein belongs to the class-I aminoacyl-tRNA synthetase family.

Its subcellular location is the cytoplasm. It catalyses the reaction tRNA(Leu) + L-leucine + ATP = L-leucyl-tRNA(Leu) + AMP + diphosphate. In Mycobacterium sp. (strain JLS), this protein is Leucine--tRNA ligase.